The sequence spans 76 residues: U-scoloptoxin(15)-Ssd3b (76 aa).

The N-terminal stretch at 1-23 (MEKKIIFLCFLVALLTFPEFISS) is a signal peptide.

Post-translationally, contains 2 disulfide bonds. As to expression, expressed by the venom gland.

It is found in the secreted. This is U-scoloptoxin(15)-Ssd3b from Scolopendra dehaani (Thai centipede).